The chain runs to 214 residues: Adenylate kinase (214 aa).

ATP is bound at residue 10 to 15 (GAGKGT). The tract at residues 30 to 59 (STGDMLRAAVKAGTELGKQAKEIMDAGKLV) is NMP. AMP-binding positions include Thr31, Arg36, 57 to 59 (KLV), 85 to 88 (GFPR), and Gln92. An LID region spans residues 122 to 159 (GRRVHAASGRVYHVKFNPPKVEGKDDVTGEDLTIRKDD). Residues Arg123 and 132–133 (VY) contribute to the ATP site. Arg156 and Arg167 together coordinate AMP. Arg200 lines the ATP pocket.

It belongs to the adenylate kinase family. In terms of assembly, monomer.

It is found in the cytoplasm. The catalysed reaction is AMP + ATP = 2 ADP. It participates in purine metabolism; AMP biosynthesis via salvage pathway; AMP from ADP: step 1/1. In terms of biological role, catalyzes the reversible transfer of the terminal phosphate group between ATP and AMP. Plays an important role in cellular energy homeostasis and in adenine nucleotide metabolism. This is Adenylate kinase from Pectobacterium carotovorum subsp. carotovorum (strain PC1).